We begin with the raw amino-acid sequence, 260 residues long: Snake venom serine protease homolog KN4 (260 aa).

The signal sequence occupies residues 1 to 18 (MVLIRVLANLLILQLSYA). Positions 19-24 (QKSSEL) are excised as a propeptide. In terms of domain architecture, Peptidase S1 spans 25–251 (IIGGDECNIN…HLDWIQNIIA (227 aa)). Disulfide bonds link cysteine 31-cysteine 165, cysteine 52-cysteine 68, cysteine 100-cysteine 258, cysteine 144-cysteine 212, cysteine 176-cysteine 191, and cysteine 202-cysteine 227. N-linked (GlcNAc...) asparagine glycosylation is found at asparagine 83, asparagine 123, asparagine 124, asparagine 156, and asparagine 172. The N-linked (GlcNAc...) asparagine glycan is linked to asparagine 253.

The protein belongs to the peptidase S1 family. Snake venom subfamily. As to expression, expressed by the venom gland.

It localises to the secreted. Snake venom serine protease homolog that may act in the hemostasis system of the prey. The chain is Snake venom serine protease homolog KN4 from Trimeresurus stejnegeri (Chinese green tree viper).